Reading from the N-terminus, the 476-residue chain is Protein transport protein Sec61 subunit alpha-like 2 (476 aa).

Over 2–33 (AIKFLEVIKPFCAVLPEIQKPERRIQFKEKVL) the chain is Cytoplasmic. A helical transmembrane segment spans residues 34–53 (WTAITLFIFLVCCQIPLFGI). At 54–76 (MSSDSADPFYWMRVIMASNRGTL) the chain is on the lumenal side. A helical membrane pass occupies residues 77 to 96 (MELGISPIVTSGLIMQLLAG). Over 97-117 (AKIIEVGDTPKDRALFNGAQK) the chain is Cytoplasmic. Residues 118–138 (LFGMIITIGQAVVYVMTGMYG) traverse the membrane as a helical segment. Residues 139–144 (DPSEMG) are Lumenal-facing. The helical transmembrane segment at 145 to 165 (AGICLLIIIQLFVAGLIVLLL) threads the bilayer. The Cytoplasmic portion of the chain corresponds to 166–172 (DELLQKG). Residues 173-193 (YGLGSGISLFIATNICETIVW) form a helical membrane-spanning segment. At 194-240 (KAFSPTTVNTGRGTEFEGAIIALFHLLATRTDKVRALREAFYRQNLP) the chain is on the lumenal side. A helical transmembrane segment spans residues 241 to 261 (NLMNLIATIFVFAVVIYFQGF). Residues 262 to 288 (RVDLPIKSARYRGQYNTYPIKLFYTSN) lie on the Cytoplasmic side of the membrane. A helical transmembrane segment spans residues 289–309 (IPIILQSALVSNLYVISQMLS). Topologically, residues 310-354 (TRFSGNFLVNLLGTWSDTSTGGPARAYPVGGLCYYLSPPESFGTV) are lumenal. A helical membrane pass occupies residues 355-375 (LEDPIHAIIYIIFMLGSCAFF). Residues 376–420 (SKTWIEVSGSSAKDVAKQLKEQQMVMRGHRETSMVHELNRYIPTA) lie on the Cytoplasmic side of the membrane. The chain crosses the membrane as a helical span at residues 421–441 (AAFGGLCIGGLSVMADFLGAI). Topologically, residues 442 to 445 (GSGT) are lumenal. A helical membrane pass occupies residues 446-462 (GILLAVTIIYQYFEIFV). Residues 463–476 (KEQSEVGSVGALLF) are Cytoplasmic-facing.

Belongs to the SecY/SEC61-alpha family. In terms of assembly, the SEC61 channel-forming translocon complex consists of channel-forming core components SEC61A1, SEC61B and SEC61G and different auxiliary components such as SEC62 and SEC63.

It is found in the endoplasmic reticulum membrane. Component of SEC61 channel-forming translocon complex that mediates transport of signal peptide-containing precursor polypeptides across the endoplasmic reticulum (ER). Forms a ribosome receptor and a gated pore in the ER membrane, both functions required for cotranslational translocation of nascent polypeptides. The sequence is that of Protein transport protein Sec61 subunit alpha-like 2 (sec61al2) from Danio rerio (Zebrafish).